Reading from the N-terminus, the 51-residue chain is Large ribosomal subunit protein bL33 (51 aa).

The protein belongs to the bacterial ribosomal protein bL33 family.

This chain is Large ribosomal subunit protein bL33, found in Pseudomonas putida (strain ATCC 47054 / DSM 6125 / CFBP 8728 / NCIMB 11950 / KT2440).